The following is a 458-amino-acid chain: Secretion-regulating guanine nucleotide exchange factor (458 aa).

RCC1 repeat units follow at residues 15–67 (AALF…VTDG), 68–119 (GDLF…LTEN), 120–171 (GQVL…ATAS), 172–230 (GIVF…LTDA), 231–283 (GEVY…QTET), 284–351 (GKMF…IIGG), and 352–402 (VCYS…LCQL). The interval 420–458 (DAIEDTESQKAMDKERNWKERQSETSTQSQSDWSRNGGL) is disordered. Over residues 426–442 (ESQKAMDKERNWKERQS) the composition is skewed to basic and acidic residues. Serine 427 bears the Phosphoserine mark.

Interacts with SEC5. The interaction occurs only in the presence of magnesium or manganese and is stimulated by dCTP or GTP.

It is found in the cytoplasm. The protein localises to the nucleus. Probable guanine nucleotide exchange factor (GEF), which may be involved in the secretion process. This Homo sapiens (Human) protein is Secretion-regulating guanine nucleotide exchange factor (SERGEF).